Here is a 167-residue protein sequence, read N- to C-terminus: Probable chemoreceptor glutamine deamidase CheD (167 aa).

It belongs to the CheD family.

It carries out the reaction L-glutaminyl-[protein] + H2O = L-glutamyl-[protein] + NH4(+). Its function is as follows. Probably deamidates glutamine residues to glutamate on methyl-accepting chemotaxis receptors (MCPs), playing an important role in chemotaxis. This is Probable chemoreceptor glutamine deamidase CheD from Moorella thermoacetica (strain ATCC 39073 / JCM 9320).